The primary structure comprises 128 residues: Holin-like protein CidA (128 aa).

3 helical membrane-spanning segments follow: residues 23 to 43 (LIVEVLHINIPGSILGIIVIF), 58 to 78 (IGALWLLAELLLFFVPSAVGI), and 84 to 104 (ILAEFGTSIILVVLISTFVVM).

This sequence belongs to the CidA/LrgA family. CidA subfamily.

The protein localises to the cell membrane. Functionally, increases the activity of extracellular murein hydrolases possibly by mediating their export via hole formation. Inhibited by the antiholin-like proteins LrgAB. In an unstressed cell, the LrgAB products probably inhibit the function of the CidA protein. When a cell is stressed by the addition of antibiotics or by other factors in the environment, CidA possibly oligomerizes within the bacterial cell membrane, creating lesions that disrupt the proton motive force, which in turn results in loss of cell viability. These lesions are also hypothesized to regulate the subsequent cell lysis by either allowing the murein hydrolases access to the cell wall substrate and/or regulating their activity by a possible change in the cell wall pH that results from loss of membrane potential. In Bacillus licheniformis (strain ATCC 14580 / DSM 13 / JCM 2505 / CCUG 7422 / NBRC 12200 / NCIMB 9375 / NCTC 10341 / NRRL NRS-1264 / Gibson 46), this protein is Holin-like protein CidA.